We begin with the raw amino-acid sequence, 467 residues long: Asparagine--tRNA ligase (467 aa).

It belongs to the class-II aminoacyl-tRNA synthetase family. Homodimer.

Its subcellular location is the cytoplasm. The catalysed reaction is tRNA(Asn) + L-asparagine + ATP = L-asparaginyl-tRNA(Asn) + AMP + diphosphate + H(+). This chain is Asparagine--tRNA ligase, found in Legionella pneumophila (strain Paris).